Here is a 184-residue protein sequence, read N- to C-terminus: MKLILASKSPRRIELLTQAGYKFEIIPAQKDEKTAYKTPHRMVKDLALKKAFEVAAKYPASTVVGADTLVYCKGRVIGKPKDKADALKILHLLNNSWQTVYTGVAIVNINKKKLFTGYAATKCKARKLSDTELKLISGKHMDKAGAYAMQDKDDMLIERVEGSLTNVIGMPMELFNKMIKEFGF.

D67 (proton acceptor) is an active-site residue.

It belongs to the Maf family. YhdE subfamily. A divalent metal cation is required as a cofactor.

It localises to the cytoplasm. It catalyses the reaction dTTP + H2O = dTMP + diphosphate + H(+). The enzyme catalyses UTP + H2O = UMP + diphosphate + H(+). In terms of biological role, nucleoside triphosphate pyrophosphatase that hydrolyzes dTTP and UTP. May have a dual role in cell division arrest and in preventing the incorporation of modified nucleotides into cellular nucleic acids. In Elusimicrobium minutum (strain Pei191), this protein is dTTP/UTP pyrophosphatase.